Here is an 88-residue protein sequence, read N- to C-terminus: Small ribosomal subunit protein uS17 (88 aa).

Belongs to the universal ribosomal protein uS17 family. Part of the 30S ribosomal subunit.

One of the primary rRNA binding proteins, it binds specifically to the 5'-end of 16S ribosomal RNA. The sequence is that of Small ribosomal subunit protein uS17 from Prochlorococcus marinus (strain MIT 9301).